Consider the following 534-residue polypeptide: Pentatricopeptide repeat-containing protein At1g07590, mitochondrial (534 aa).

A mitochondrion-targeting transit peptide spans 1 to 20 (MRSIIALMRQREYFVQAIRR). PPR repeat units follow at residues 165–199 (NELL…GYRT), 200–234 (SHLV…KATP), 235–269 (HVST…GVEP), 270–300 (NEVS…IEKS), 305–335 (NWST…IRGF), 339–369 (RSKS…MKNV), 374–408 (ETEQ…GFKP), 409–443 (NSIT…KTSK), and 451–485 (WLET…KYNR).

The protein belongs to the PPR family. P subfamily.

The protein resides in the mitochondrion. The chain is Pentatricopeptide repeat-containing protein At1g07590, mitochondrial from Arabidopsis thaliana (Mouse-ear cress).